We begin with the raw amino-acid sequence, 194 residues long: Molybdenum cofactor guanylyltransferase (194 aa).

GTP contacts are provided by residues 12–14 (LAG), lysine 25, asparagine 53, aspartate 70, and aspartate 100. Position 100 (aspartate 100) interacts with Mg(2+).

Belongs to the MobA family. Monomer. It depends on Mg(2+) as a cofactor.

It localises to the cytoplasm. The enzyme catalyses Mo-molybdopterin + GTP + H(+) = Mo-molybdopterin guanine dinucleotide + diphosphate. In terms of biological role, transfers a GMP moiety from GTP to Mo-molybdopterin (Mo-MPT) cofactor (Moco or molybdenum cofactor) to form Mo-molybdopterin guanine dinucleotide (Mo-MGD) cofactor. This is Molybdenum cofactor guanylyltransferase from Aliivibrio salmonicida (strain LFI1238) (Vibrio salmonicida (strain LFI1238)).